We begin with the raw amino-acid sequence, 493 residues long: Probable mannosyl-oligosaccharide alpha-1,2-mannosidase 1B (493 aa).

The N-terminal stretch at Met-1–Ala-18 is a signal peptide. 2 N-linked (GlcNAc...) asparagine glycosylation sites follow: Asn-87 and Asn-174. Cys-324 and Cys-353 are joined by a disulfide. Glu-367 serves as the catalytic Proton donor. Asn-489 carries N-linked (GlcNAc...) asparagine glycosylation.

The protein belongs to the glycosyl hydrolase 47 family. Monomer. The cofactor is Ca(2+). Requires Mg(2+) as cofactor.

The protein localises to the cytoplasmic vesicle lumen. It catalyses the reaction N(4)-(alpha-D-Man-(1-&gt;2)-alpha-D-Man-(1-&gt;2)-alpha-D-Man-(1-&gt;3)-[alpha-D-Man-(1-&gt;2)-alpha-D-Man-(1-&gt;3)-[alpha-D-Man-(1-&gt;2)-alpha-D-Man-(1-&gt;6)]-alpha-D-Man-(1-&gt;6)]-beta-D-Man-(1-&gt;4)-beta-D-GlcNAc-(1-&gt;4)-beta-D-GlcNAc)-L-asparaginyl-[protein] (N-glucan mannose isomer 9A1,2,3B1,2,3) + 4 H2O = N(4)-(alpha-D-Man-(1-&gt;3)-[alpha-D-Man-(1-&gt;3)-[alpha-D-Man-(1-&gt;6)]-alpha-D-Man-(1-&gt;6)]-beta-D-Man-(1-&gt;4)-beta-D-GlcNAc-(1-&gt;4)-beta-D-GlcNAc)-L-asparaginyl-[protein] (N-glucan mannose isomer 5A1,2) + 4 beta-D-mannose. The enzyme catalyses N(4)-(alpha-D-Man-(1-&gt;2)-alpha-D-Man-(1-&gt;2)-alpha-D-Man-(1-&gt;3)-[alpha-D-Man-(1-&gt;3)-[alpha-D-Man-(1-&gt;2)-alpha-D-Man-(1-&gt;6)]-alpha-D-Man-(1-&gt;6)]-beta-D-Man-(1-&gt;4)-beta-D-GlcNAc-(1-&gt;4)-beta-D-GlcNAc)-L-asparaginyl-[protein] (N-glucan mannose isomer 8A1,2,3B1,3) + 3 H2O = N(4)-(alpha-D-Man-(1-&gt;3)-[alpha-D-Man-(1-&gt;3)-[alpha-D-Man-(1-&gt;6)]-alpha-D-Man-(1-&gt;6)]-beta-D-Man-(1-&gt;4)-beta-D-GlcNAc-(1-&gt;4)-beta-D-GlcNAc)-L-asparaginyl-[protein] (N-glucan mannose isomer 5A1,2) + 3 beta-D-mannose. The protein operates within protein modification; protein glycosylation. Its function is as follows. Involved in the maturation of Asn-linked oligosaccharides. Progressively trims alpha-1,2-linked mannose residues from Man(9)GlcNAc(2) to produce Man(5)GlcNAc(2). This Aspergillus fumigatus (strain CBS 144.89 / FGSC A1163 / CEA10) (Neosartorya fumigata) protein is Probable mannosyl-oligosaccharide alpha-1,2-mannosidase 1B (mns1B).